Here is a 142-residue protein sequence, read N- to C-terminus: Small heat shock protein IbpB (142 aa).

The region spanning 26 to 137 is the sHSP domain; that stretch reads SGESQSFPPY…PPQRIAINER (112 aa).

It belongs to the small heat shock protein (HSP20) family. In terms of assembly, homodimer. Forms homomultimers of about 100-150 subunits at optimal growth temperatures. Conformation changes to oligomers at high temperatures or high ionic concentrations. The decrease in size of the multimers is accompanied by an increase in chaperone activity.

It is found in the cytoplasm. Associates with aggregated proteins, together with IbpA, to stabilize and protect them from irreversible denaturation and extensive proteolysis during heat shock and oxidative stress. Aggregated proteins bound to the IbpAB complex are more efficiently refolded and reactivated by the ATP-dependent chaperone systems ClpB and DnaK/DnaJ/GrpE. Its activity is ATP-independent. The sequence is that of Small heat shock protein IbpB from Salmonella typhi.